The chain runs to 267 residues: Luciferase (267 aa).

Asn4 is a glycosylation site (N-linked (GlcNAc...) asparagine). Residues 17 to 39 (LSSRSIAITCGVVLASAIAFPII) traverse the membrane as a helical segment.

This sequence belongs to the fungal luciferase family.

It is found in the membrane. It carries out the reaction 3-hydroxyhispidin + O2 = (E)-caffeoylpyruvate + hnu + CO2. The catalysed reaction is 3-hydroxyhispidin + O2 = 4-[(E)-2-(3,4-dihydroxyphenyl)ethenyl]-1,7-dihydroxy-2,3,5-trioxabicyclo[2.2.2]oct-7-en-6-one. Functionally, luciferase; part of the gene cluster that mediates the fungal bioluminescence cycle. Uses the fungal luciferin 3-hydroxyhispidin as a substrate to produce an endoperoxide as a high-energy intermediate with decomposition that yields oxyluciferin (also known as caffeoylpyruvate) and light emission. The fungal bioluminescence cycle begins with the hispidin synthetase that catalyzes the formation of hispidin which is further hydroxylated by the hispidin-3-hydroxylase, yielding the fungal luciferin 3-hydroxyhispidin. The luciferase then produces an endoperoxide as a high-energy intermediate with decomposition that yields oxyluciferin and light emission. Oxyluciferin can be recycled to caffeic acid by caffeoylpyruvate hydrolase. This is Luciferase from Neonothopanus nambi (Agaricus nambi).